Here is a 776-residue protein sequence, read N- to C-terminus: Kinesin-like protein KIN-8A (776 aa).

Disordered regions lie at residues 1–31 and 80–135; these read MPVSTRASAAGGQPWSSAAPAPASAPGRGGA and VGEV…KSSH. Positions 7–26 are enriched in low complexity; sequence ASAAGGQPWSSAAPAPASAP. Residues 123 to 132 show a composition bias toward pro residues; that stretch reads PPPPPAPPPK. The region spanning 205 to 534 is the Kinesin motor domain; sequence RIMVFVRLRP…LHWADRAKEI (330 aa). An ATP-binding site is contributed by 297-304; it reads GATGAGKT. Positions 554-592 form a coiled coil; sequence TDQAKLVLELQKENSELRQQLARQQQKLLTVQAQTLASN. Positions 590–611 are disordered; sequence ASNASPQQSPAPSAQISTPCST. Positions 593–604 are enriched in low complexity; that stretch reads ASPQQSPAPSAQ. The stretch at 634–671 forms a coiled coil; sequence AAENAQVRDLQRKVKAMEAEIEKMKKEHLLQLKQKDEF.

It belongs to the TRAFAC class myosin-kinesin ATPase superfamily. Kinesin family. KIN-8 subfamily.

The polypeptide is Kinesin-like protein KIN-8A (Oryza sativa subsp. japonica (Rice)).